Here is a 118-residue protein sequence, read N- to C-terminus: Small ribosomal subunit protein uS13 (118 aa).

The tract at residues S94–K118 is disordered.

It belongs to the universal ribosomal protein uS13 family. In terms of assembly, part of the 30S ribosomal subunit. Forms a loose heterodimer with protein S19. Forms two bridges to the 50S subunit in the 70S ribosome.

In terms of biological role, located at the top of the head of the 30S subunit, it contacts several helices of the 16S rRNA. In the 70S ribosome it contacts the 23S rRNA (bridge B1a) and protein L5 of the 50S subunit (bridge B1b), connecting the 2 subunits; these bridges are implicated in subunit movement. Contacts the tRNAs in the A and P-sites. This chain is Small ribosomal subunit protein uS13, found in Shewanella halifaxensis (strain HAW-EB4).